The chain runs to 177 residues: ATP-dependent protease subunit HslV (177 aa).

The active site involves threonine 5. Na(+) contacts are provided by glycine 161, cysteine 164, and threonine 167.

The protein belongs to the peptidase T1B family. HslV subfamily. In terms of assembly, a double ring-shaped homohexamer of HslV is capped on each side by a ring-shaped HslU homohexamer. The assembly of the HslU/HslV complex is dependent on binding of ATP.

The protein resides in the cytoplasm. It catalyses the reaction ATP-dependent cleavage of peptide bonds with broad specificity.. Allosterically activated by HslU binding. In terms of biological role, protease subunit of a proteasome-like degradation complex believed to be a general protein degrading machinery. The protein is ATP-dependent protease subunit HslV of Campylobacter concisus (strain 13826).